Here is a 529-residue protein sequence, read N- to C-terminus: Nuclear distribution protein PAC1 (529 aa).

The stretch at Arg68 to Ser89 forms a coiled coil. 7 WD repeats span residues Gln120 to Pro159, Ala165 to Thr218, Gly221 to Thr261, Gly264 to Leu318, Gly321 to His395, Gly416 to Arg455, and Thr496 to Ser529.

It belongs to the WD repeat LIS1/nudF family. In terms of assembly, self-associates. Interacts with NDL1 and dynein.

Its subcellular location is the cytoplasm. The protein resides in the cytoskeleton. The protein localises to the spindle pole. Positively regulates the activity of the minus-end directed microtubule motor protein dynein. Plays a central role in positioning the mitotic spindle at the bud neck during cell division. Targets cytoplasmic dynein to microtubule plus ends, thereby promoting dynein-mediated microtubule sliding along the bud cortex and consequently the movement of the mitotic spindle to the bud neck. The polypeptide is Nuclear distribution protein PAC1 (Debaryomyces hansenii (strain ATCC 36239 / CBS 767 / BCRC 21394 / JCM 1990 / NBRC 0083 / IGC 2968) (Yeast)).